A 159-amino-acid chain; its full sequence is SsrA-binding protein (159 aa).

The disordered stretch occupies residues 131–159 (KGKKLHDKRESEKERDWNRQKSRLLKDNG). Basic and acidic residues predominate over residues 137–159 (DKRESEKERDWNRQKSRLLKDNG).

Belongs to the SmpB family.

It is found in the cytoplasm. In terms of biological role, required for rescue of stalled ribosomes mediated by trans-translation. Binds to transfer-messenger RNA (tmRNA), required for stable association of tmRNA with ribosomes. tmRNA and SmpB together mimic tRNA shape, replacing the anticodon stem-loop with SmpB. tmRNA is encoded by the ssrA gene; the 2 termini fold to resemble tRNA(Ala) and it encodes a 'tag peptide', a short internal open reading frame. During trans-translation Ala-aminoacylated tmRNA acts like a tRNA, entering the A-site of stalled ribosomes, displacing the stalled mRNA. The ribosome then switches to translate the ORF on the tmRNA; the nascent peptide is terminated with the 'tag peptide' encoded by the tmRNA and targeted for degradation. The ribosome is freed to recommence translation, which seems to be the essential function of trans-translation. The chain is SsrA-binding protein from Rhizobium leguminosarum bv. trifolii (strain WSM2304).